The sequence spans 1397 residues: MNSFQIIELIGSGSYGKVYKAIHNLSKCTVALKIISVMNIENGLPVEVKYLMKLRDCKNIVHLIEYFYSNDDKLVMVFEYLEYDLWKFISPKNKYMTLSCTKFFIHQLLEGLDELHSQKIMHLDIKPSNLLINPRFDLKIADFGFTTYIGNPHLAHQVISLFYRPPELLMGSRNYGPEVDIWSVGCIIVEMLTGFYMFAGSNDSLQLELIFKTFGTPTEKNWPGISKLSGYSPYLGSKSKKYPSKSLKDISKFKSFSNSTLDIILRMLTLCPKNRISTKEALNHPWFFEDPIASPPLDDIINCLVSRPVKISKQHQKTNNCNNNNGSYDIIPPNSILVPKRSSSQQAALQTQQVVDVDLQYLILKAEQQQIQYQKLVLQTSVPNHIYKEVYEVNQLLKQYILRLKQQKVNLNNNNLNNNNNNLYGNNNHNNNNNNNNNNNNNNNNNNYNNNNNNHNNNYNHDNNNNNNYNNNNYKNNNNSNNNFSFNNSNNNNNNNNNNNRNNRNNNNNNNNNNNNNNYNNNSNNNSYNNNFNNGFNNNDNINDDNNNNNSYNNVNNNNINNNNNNNNGFNGFNNYGNNFNNSNNNGNQFGANNNSFNNTDFSNDSNYGSYCNGLMDLINNNSMYNGGNYYMNNASFHQRIQEHIQKIQQQQLQQMEDQQQEKLNFRDYHPLSIPSQHHNTSSSDTHNNNNNNYNNNNNNNNNINNNNINSIHNQSSDHNHFIPNNGFTNENNNNHCINNMNNSNNNNNNNIGNIGSNGGSINEMGNNNNNNNNNNNNNNNNNNNNNNINANHNRNNNNGSNDFSDFNGNQMVINSYNNNSNNNGNINGNNNNGNGNINGIIGNNNNNNSNNNNNTSFNGNRTTTTTTTSSNFNNINNNNNNSNNNNKNNNNKNNNNNNNNNNNNNNNNNNNNNNNNSNNNSINNNTNNNNNNNNNNNGNGLTSSYANHFQYNHPPFNISNAPHPIPFLNNQSIPNSNYQFLNRFSFSNYSNNNSNGLANNYQNPFGHGATNSNNNNSGNNDHVFGHNTFNFNQNNNNNNNNNNNNNNNNNNNNNNNSNNNSNNNNYNSNNNDNSNSNSNNNNNNNNNNNNSLFNNFNTHNNSINRGNNSFDSFNNGFNHLKNNNNNINNNNNDINNNNNNNNNNNNNNGITKNNTQFGPNILSSTQTSHNSPVSLTPISVSSSSFSNYSPTSFSSSSMESLSSSSEFLSSESLSFTNSNQFSPLLNSASQDINNNSRSSRHRSKLNIDTKGNNNNNNNNKNNNNNNNNNNNNNNNNNNNNNNSNNINNDNNNNSNNNSNSNNNNSNSNNNNNSNNNNNNSFGLKRYVDDNEEQLLANQKKKKNIKSSPLPSASSSQQSQTQQQHQIQQQSQTQQQSQTQKIENNDGLSVENPIVLD.

A Protein kinase domain is found at 4–287 (FQIIELIGSG…TKEALNHPWF (284 aa)). ATP contacts are provided by residues 10-18 (IGSGSYGKV) and Lys33. The Proton acceptor role is filled by Asp124. 8 disordered regions span residues 412–567 (NNNN…NNNN), 671–728 (PLSI…NNGF), 763–831 (NEMG…NGNN), 845–949 (NNNN…YANH), 996–1101 (NGLA…NTHN), 1115–1174 (NNGF…NSPV), 1227–1324 (NSAS…SFGL), and 1340–1397 (KKKK…IVLD). The segment covering 676-715 (SQHHNTSSSDTHNNNNNNYNNNNNNNNNINNNNINSIHNQ) has biased composition (low complexity). 4 stretches are compositionally biased toward low complexity: residues 845–941 (NNNN…NGNG), 1012–1021 (NSNNNNSGNN), 1028–1101 (NTFN…NTHN), and 1115–1155 (NNGF…TKNN). A compositionally biased stretch (polar residues) spans 1156–1171 (TQFGPNILSSTQTSHN). Low complexity-rich tracts occupy residues 1253–1321 (NNNN…NNNS) and 1354–1380 (SSSQ…SQTQ).

It belongs to the protein kinase superfamily. CMGC Ser/Thr protein kinase family. CDC2/CDKX subfamily.

The enzyme catalyses L-seryl-[protein] + ATP = O-phospho-L-seryl-[protein] + ADP + H(+). It carries out the reaction L-threonyl-[protein] + ATP = O-phospho-L-threonyl-[protein] + ADP + H(+). This is Probable cyclin-dependent serine/threonine-protein kinase DDB_G0292550 from Dictyostelium discoideum (Social amoeba).